We begin with the raw amino-acid sequence, 127 residues long: Mediator of RNA polymerase II transcription subunit 31 (127 aa).

This sequence belongs to the Mediator complex subunit 31 family. In terms of assembly, component of the Mediator complex, which is composed of at least 21 subunits that form three structurally distinct submodules. The Mediator head module contains MED6, MED8, MED11, SRB4/MED17, SRB5/MED18, ROX3/MED19, SRB2/MED20 and SRB6/MED22, the middle module contains MED1, MED4, NUT1/MED5, MED7, CSE2/MED9, NUT2/MED10, SRB7/MED21 and SOH1/MED31, and the tail module contains MED2, PGD1/MED3, RGR1/MED14, GAL11/MED15 and SIN4/MED16. The head and the middle modules interact directly with RNA polymerase II, whereas the elongated tail module interacts with gene-specific regulatory proteins.

Its subcellular location is the nucleus. In terms of biological role, component of the Mediator complex, a coactivator involved in the regulated transcription of nearly all RNA polymerase II-dependent genes. Mediator functions as a bridge to convey information from gene-specific regulatory proteins to the basal RNA polymerase II transcription machinery. The Mediator complex, having a compact conformation in its free form, is recruited to promoters by direct interactions with regulatory proteins and serves for the assembly of a functional preinitiation complex with RNA polymerase II and the general transcription factors. The Mediator complex unfolds to an extended conformation and partially surrounds RNA polymerase II, specifically interacting with the unphosphorylated form of the C-terminal domain (CTD) of RNA polymerase II. The Mediator complex dissociates from the RNA polymerase II holoenzyme and stays at the promoter when transcriptional elongation begins. The protein is Mediator of RNA polymerase II transcription subunit 31 (SOH1) of Saccharomyces cerevisiae (strain ATCC 204508 / S288c) (Baker's yeast).